The sequence spans 325 residues: Beta-ketoacyl-[acyl-carrier-protein] synthase III (325 aa).

Residues Cys-112 and His-250 contribute to the active site. Residues 251–255 (QANIR) form an ACP-binding region. The active site involves Asn-280.

Belongs to the thiolase-like superfamily. FabH family. Homodimer.

The protein localises to the cytoplasm. The enzyme catalyses malonyl-[ACP] + acetyl-CoA + H(+) = 3-oxobutanoyl-[ACP] + CO2 + CoA. The protein operates within lipid metabolism; fatty acid biosynthesis. Catalyzes the condensation reaction of fatty acid synthesis by the addition to an acyl acceptor of two carbons from malonyl-ACP. Catalyzes the first condensation reaction which initiates fatty acid synthesis and may therefore play a role in governing the total rate of fatty acid production. Possesses both acetoacetyl-ACP synthase and acetyl transacylase activities. Its substrate specificity determines the biosynthesis of branched-chain and/or straight-chain of fatty acids. The sequence is that of Beta-ketoacyl-[acyl-carrier-protein] synthase III from Clostridium acetobutylicum (strain ATCC 824 / DSM 792 / JCM 1419 / IAM 19013 / LMG 5710 / NBRC 13948 / NRRL B-527 / VKM B-1787 / 2291 / W).